A 160-amino-acid chain; its full sequence is uncharacterized protein (160 aa).

One can recognise a Cupin type-2 domain in the interval 37-110 (LMSLKPKEDI…TDYLKLYTIY (74 aa)).

Its subcellular location is the virion. This is an uncharacterized protein from Acanthamoeba polyphaga mimivirus (APMV).